The primary structure comprises 492 residues: Probable malate:quinone oxidoreductase 1 (492 aa).

It belongs to the MQO family. The cofactor is FAD.

It catalyses the reaction (S)-malate + a quinone = a quinol + oxaloacetate. It functions in the pathway carbohydrate metabolism; tricarboxylic acid cycle; oxaloacetate from (S)-malate (quinone route): step 1/1. This chain is Probable malate:quinone oxidoreductase 1, found in Staphylococcus aureus (strain MRSA252).